The following is a 53-amino-acid chain: uncharacterized protein (53 aa).

This is an uncharacterized protein from Rickettsia conorii (strain ATCC VR-613 / Malish 7).